The primary structure comprises 259 residues: MNWLEAFILGIIQGLTEFLPISSTGHLYLGRHLFQLDEAGLFLDTMLHIGTLLAVFIYYKKEFIYLIKNPFSKLMLLLIVGTIPAVVIGLLFKDFFEDISKTGITIGWEFLVTGFFLYMADKQKNGRKKMDDITYKDAFIIGSFQAAAIFPAISRSGMTIVAALWRKLDRETAAYFSFLLSTPAIVGAIILQFADVFQGKAESISNTSLIVGTLSAAFFGYIAVSWMIQYLKRHSLKVFAYYVWGLGIIIITLQYTHVF.

Helical transmembrane passes span 1-21 (MNWLEAFILGIIQGLTEFLPI), 39-59 (AGLFLDTMLHIGTLLAVFIYY), 71-91 (FSKLMLLLIVGTIPAVVIGLL), 99-119 (ISKTGITIGWEFLVTGFFLYM), 133-153 (ITYKDAFIIGSFQAAAIFPAI), 173-193 (AAYFSFLLSTPAIVGAIILQF), 208-228 (SLIVGTLSAAFFGYIAVSWMI), and 239-259 (FAYYVWGLGIIIITLQYTHVF).

The protein belongs to the UppP family.

The protein resides in the cell membrane. It catalyses the reaction di-trans,octa-cis-undecaprenyl diphosphate + H2O = di-trans,octa-cis-undecaprenyl phosphate + phosphate + H(+). Functionally, catalyzes the dephosphorylation of undecaprenyl diphosphate (UPP). Confers resistance to bacitracin. This Bacillus thuringiensis (strain Al Hakam) protein is Undecaprenyl-diphosphatase 4.